Here is a 508-residue protein sequence, read N- to C-terminus: Photosystem II CP47 reaction center protein (508 aa).

The next 6 helical transmembrane spans lie at S21–S36, I101–W115, G140–F156, I203–S218, V237–V252, and S457–R472.

The protein belongs to the PsbB/PsbC family. PsbB subfamily. PSII is composed of 1 copy each of membrane proteins PsbA, PsbB, PsbC, PsbD, PsbE, PsbF, PsbH, PsbI, PsbJ, PsbK, PsbL, PsbM, PsbT, PsbX, PsbY, PsbZ, Psb30/Ycf12, at least 3 peripheral proteins of the oxygen-evolving complex and a large number of cofactors. It forms dimeric complexes. Binds multiple chlorophylls. PSII binds additional chlorophylls, carotenoids and specific lipids. serves as cofactor.

It localises to the plastid. The protein localises to the chloroplast thylakoid membrane. Its function is as follows. One of the components of the core complex of photosystem II (PSII). It binds chlorophyll and helps catalyze the primary light-induced photochemical processes of PSII. PSII is a light-driven water:plastoquinone oxidoreductase, using light energy to abstract electrons from H(2)O, generating O(2) and a proton gradient subsequently used for ATP formation. This chain is Photosystem II CP47 reaction center protein, found in Lepidium virginicum (Virginia pepperweed).